The primary structure comprises 156 residues: Small ribosomal subunit protein uS7 (156 aa).

This sequence belongs to the universal ribosomal protein uS7 family. Part of the 30S ribosomal subunit. Contacts proteins S9 and S11.

In terms of biological role, one of the primary rRNA binding proteins, it binds directly to 16S rRNA where it nucleates assembly of the head domain of the 30S subunit. Is located at the subunit interface close to the decoding center, probably blocks exit of the E-site tRNA. The sequence is that of Small ribosomal subunit protein uS7 from Synechococcus sp. (strain WH7803).